A 79-amino-acid polypeptide reads, in one-letter code: MKLHSLISVLLLFVTLIPKGKTGVIPGQKQCIALKGVCRDKLCSTLDDTIGICNEGKKCCRRWWILEPYPTPVPKGKSP.

The first 22 residues, 1 to 22 (MKLHSLISVLLLFVTLIPKGKT), serve as a signal peptide directing secretion. Intrachain disulfides connect C38-C53 and C43-C60.

It belongs to the beta-defensin family.

The protein localises to the secreted. Its function is as follows. Antimicrobial host-defense peptide. The protein is Beta-defensin 130 of Pan troglodytes (Chimpanzee).